A 205-amino-acid polypeptide reads, in one-letter code: Quinone-oxidoreductase QR2 (205 aa).

The Flavodoxin-like domain maps to V5–Y192. FMN-binding positions include S11–H15, I112–G165, and H136. Residue Y13 participates in NAD(+) binding.

The protein belongs to the WrbA family. Requires FMN as cofactor.

The catalysed reaction is a quinone + NADH + H(+) = a quinol + NAD(+). The enzyme catalyses a quinone + NADPH + H(+) = a quinol + NADP(+). Inhibited by dicumarol. Functionally, NAD(P)H:quinone oxidoreductase reducing quinones by a two-electron transfer mechanism. Can use either NADPH or NADH as electron donor. Can use menadione, 5-hydroxy-1,4-naphthoquinone (juglone) and 2,6-dimethoxy-p-benzoquinone (DMBQ) as substrates. Mitigates the toxicity of exogenous quinones in the rhizosphere. The polypeptide is Quinone-oxidoreductase QR2 (Triphysaria versicolor (Yellow owl's clover)).